The following is a 103-amino-acid chain: MAAVSLTVSTVKPLGDRIFIKVSASEEKTAGGILLPDSAKEKPQVGEVAQVGPGKLNDDGSRQTPEVSIGDKVLYSKYAGTDIKLGGDEYVLLSEKDILAVVS.

Belongs to the GroES chaperonin family. Heptamer of 7 subunits arranged in a ring. Interacts with the chaperonin GroEL.

Its subcellular location is the cytoplasm. Together with the chaperonin GroEL, plays an essential role in assisting protein folding. The GroEL-GroES system forms a nano-cage that allows encapsulation of the non-native substrate proteins and provides a physical environment optimized to promote and accelerate protein folding. GroES binds to the apical surface of the GroEL ring, thereby capping the opening of the GroEL channel. The polypeptide is Co-chaperonin GroES (Prochlorococcus marinus (strain MIT 9215)).